Consider the following 89-residue polypeptide: Small ribosomal subunit protein uS15 (89 aa).

It belongs to the universal ribosomal protein uS15 family. Part of the 30S ribosomal subunit. Forms a bridge to the 50S subunit in the 70S ribosome, contacting the 23S rRNA.

Functionally, one of the primary rRNA binding proteins, it binds directly to 16S rRNA where it helps nucleate assembly of the platform of the 30S subunit by binding and bridging several RNA helices of the 16S rRNA. In terms of biological role, forms an intersubunit bridge (bridge B4) with the 23S rRNA of the 50S subunit in the ribosome. This chain is Small ribosomal subunit protein uS15, found in Bartonella quintana (strain Toulouse) (Rochalimaea quintana).